A 1136-amino-acid polypeptide reads, in one-letter code: Solute carrier family 12 member 2 (1136 aa).

2 disordered regions span residues 1-73 and 91-121; these read MSAS…SVSG and PDAAPAETAQNGDTVMSEGSLHSSTGGQQHH. Residues 1 to 208 are Cytoplasmic-facing; it reads MSASPPISAG…SESKGVVKFG (208 aa). A phosphothreonine mark is found at threonine 125, threonine 129, threonine 134, threonine 139, and threonine 152. The chain crosses the membrane as a discontinuously helical span at residues 209 to 234; sequence WIKGVLVRCMLNIWGVMLFIRMTWIV. Position 219 (leucine 219) interacts with Na(+). The K(+) site is built by asparagine 220 and isoleucine 221. Residue tryptophan 222 coordinates Na(+). Positions 223, 224, and 225 each coordinate chloride. Residues 235-238 are Extracellular-facing; sequence GQAG. Residues 239–261 traverse the membrane as a helical segment; it reads IAYSCIIVIMATVVTTITGCSTS. Over 262–285 the chain is Cytoplasmic; it reads AIATNGFVRGGGAYYLISRSLGPE. A helical transmembrane segment spans residues 286 to 314; sequence FGGSIGLIFAFANAVAVAMYVVGFAETVV. Phenylalanine 294 is a binding site for chloride. Residue tyrosine 305 participates in K(+) binding. Over 315-327 the chain is Extracellular; the sequence is ELLMDSGLLMIDQ. The next 2 helical transmembrane spans lie at 328–351 and 352–376; these read TNDIRVIGTITVILLLGISVAGME and WEAKAQIFLLVILITAIFNYFIGSF. Residues 377–407 lie on the Extracellular side of the membrane; it reads IAVDSKKKFGFFSYDAGILAENFGPDFRGQT. The chain crosses the membrane as a discontinuously helical span at residues 408–427; the sequence is FFSVFSIFFPAATGILAGAN. The K(+) site is built by proline 417, alanine 418, and threonine 420. Proline 417 and alanine 418 together coordinate chloride. Chloride-binding residues include glycine 421 and isoleucine 422. Residues 428 to 438 are Cytoplasmic-facing; the sequence is ISGDLADPQMA. A helical membrane pass occupies residues 439–462; that stretch reads IPKGTLLAILITGLVYVGVAISAG. Over 463–523 the chain is Extracellular; that stretch reads ACIVRDATGI…DFQVMSVVSG (61 aa). N-linked (GlcNAc...) asparagine glycosylation is found at asparagine 475 and asparagine 481. A disulfide bridge links cysteine 496 with cysteine 507. A helical transmembrane segment spans residues 524–551; it reads FSPLISAGIFSATLSSALASLVSAPKVF. 3 residues coordinate Na(+): alanine 535, serine 538, and serine 539. The Cytoplasmic portion of the chain corresponds to 552–576; it reads QALCKDNIYPGIAIFGKGYGKNNEP. The next 2 membrane-spanning stretches (helical) occupy residues 577 to 595 and 596 to 619; these read LRGYFLTFGIALAFILIAE and LNVIAPIISNFFLASYALINFSVF. Residues phenylalanine 607 and tyrosine 611 each coordinate chloride. Over 620-636 the chain is Cytoplasmic; the sequence is HASLANSPGWRPSFKYY. The next 2 helical transmembrane spans lie at 637–656 and 657–672; these read NMWASLAGAILCCVVMFIIN and WWAALLTNVIVLSLYI. Residues 673 to 1136 are Cytoplasmic-facing; the sequence is YVSYKKPDVN…NHQSVLTFYS (464 aa). The scissor helix stretch occupies residues 689-702; it reads ALTYHQALTHSLQL. Positions 875 to 921 are disordered; the sequence is SKDSDGDSSKPSSKATSVQNSPAVQKDEDDDGKAHTQPLLKKDKKSP. A Phosphothreonine modification is found at threonine 1059.

The protein belongs to the SLC12A transporter family. In terms of assembly, homodimer; adopts a domain-swap conformation at the scissor helices connecting the transmembrane domain and C-terminal domain. In terms of processing, phosphorylated at Thr-125, Thr-129 and Thr-134 by OXSR1/OSR1 and STK39/SPAK downstream of WNK kinases (WNK1, WNK2, WNK3 or WNK4), promoting its activity.

The protein resides in the basolateral cell membrane. It catalyses the reaction K(+)(out) + 2 chloride(out) + Na(+)(out) = K(+)(in) + 2 chloride(in) + Na(+)(in). Its activity is regulated as follows. Activated following phosphorylation by OXSR1/OSR1 and STK39/SPAK. Inhibited by bumetanide. Functionally, cation-chloride cotransporter which mediates the electroneutral transport of chloride, potassium and/or sodium ions across the membrane. Plays a vital role in the regulation of ionic balance and cell volume. Important for maintenance of endolymph volume in the otic vesicle, probably by regulating ion homeostasis. Also plays a role in normal development of the swim bladder. This Danio rerio (Zebrafish) protein is Solute carrier family 12 member 2.